The primary structure comprises 409 residues: DEP domain-containing mTOR-interacting protein (409 aa).

At Met-1 the chain carries N-acetylmethionine. The disordered stretch occupies residues 1–25 (MEEGGSTGSAGSDSSTSGSGGAQQR). DEP domains follow at residues 36–119 (TGEQ…RFRK) and 145–219 (SPEN…QFRM). Residues 217-235 (FRMNFRRRRRLMELLNEKS) carry the DDEX motif motif. Ser-235 is subject to Phosphoserine; by MAPK3. Position 241 is a phosphothreonine (Thr-241). Ser-244 and Ser-258 each carry phosphoserine. A Phosphothreonine modification is found at Thr-259. Residues Ser-263, Ser-265, Ser-280, Ser-282, and Ser-283 each carry the phosphoserine modification. Residues Ser-286 and Ser-287 each carry the phosphoserine; by CK1 modification. A BetaTrCP degron motif motif is present at residues 286-291 (SSGYFS). The residue at position 289 (Tyr-289) is a Phosphotyrosine; by SYK. Ser-291 is subject to Phosphoserine; by CK1. Ser-293 is modified (phosphoserine; by MTOR). The residue at position 295 (Thr-295) is a Phosphothreonine; by MTOR. A phosphoserine mark is found at Ser-297 and Ser-298. A Phosphoserine; by MTOR modification is found at Ser-299. One can recognise a PDZ domain in the interval 330 to 407 (TFTIVGDAVG…TIVMEVMEEL (78 aa)).

Associated component of the mechanistic target of rapamycin complex 1 (mTORC1) which contains MTOR, MLST8 and RPTOR. Associated component of the mechanistic target of rapamycin complex 2 (mTORC2) which contains MTOR, MLST8, PROTOR1, RICTOR, MAPKAP1 and DEPTOR. Interacts (via PDZ domain) with MTOR; interacts with MTOR within both mTORC1 and mTORC2. Interacts (via PDZ domain) with MINAR1 (via N-terminus). Interacts with SIK3. In terms of processing, phosphorylation weakens interaction with MTOR within mTORC1 and mTORC2. Phosphorylated at Ser-286, Ser-287 and Ser-291 in response to mitogenic stimulation by MTOR: DEPTOR is either directly phosphorylated by MTOR or indirectly via proteins kinases that are activated by MTOR, such as CK1/CSNK1A1. Phosphorylation at Ser-286, Ser-287 and Ser-291 promotes ubiquitination by the SCF(BTRC) complex, followed by degradation. Phosphorylation at Ser-235 by MAPK3/ERK1 promotes deubiquitination by USP7, enhancing its stability. Phosphorylation at Tyr-289 by SYK impairs its interaction with MTOR, promoting mTORC1 and mTORC2 signaling. Ubiquitinated; leading to proteasomal degradation. Ubiquitination by the SCF(BTRC) and SCF(FBXW11) complexes following phosphorylation at Ser-286, Ser-287 and Ser-291 by MTOR, leads to its degradation by the proteasome. Deubiquitinated by OTUB1 in response to amino acid via a non-canonical mechanism, leading to DEPTOR stability. Deubiquitinated by USP7 following phosphorylation at Ser-235, promoting its stability.

The protein localises to the lysosome membrane. With respect to regulation, inhibited upon phosphatidic acid-binding: phosphatidic acid produced upon mitogenic stimulation promotes DEPTOR dissociatiom from the mTORC1 and mTORC2 complexes, leading to their activation. Specifically binds unsaturated phosphatidic acid, such as 16:0-18:1, 18:0-18:1 and di-18:1. Inhibited when nutrients are present via a feedback loop: phosphorylation by MTOR promotes DEPTOR ubiquitination and degradation. Functionally, negative regulator of the mTORC1 and mTORC2 complexes: inhibits the protein kinase activity of MTOR, thereby inactivating both complexes. DEPTOR inhibits mTORC1 and mTORC2 to induce autophagy. In contrast to AKT1S1/PRAS40, only partially inhibits mTORC1 activity. This chain is DEP domain-containing mTOR-interacting protein, found in Homo sapiens (Human).